A 76-amino-acid chain; its full sequence is ATP synthase subunit c (76 aa).

The next 2 helical transmembrane spans lie at 8–28 and 55–75; these read LLAA…GVGI and VAFA…LIFV.

Belongs to the ATPase C chain family. F-type ATPases have 2 components, F(1) - the catalytic core - and F(0) - the membrane proton channel. F(1) has five subunits: alpha(3), beta(3), gamma(1), delta(1), epsilon(1). F(0) has three main subunits: a(1), b(2) and c(10-14). The alpha and beta chains form an alternating ring which encloses part of the gamma chain. F(1) is attached to F(0) by a central stalk formed by the gamma and epsilon chains, while a peripheral stalk is formed by the delta and b chains.

It is found in the cell membrane. Functionally, f(1)F(0) ATP synthase produces ATP from ADP in the presence of a proton or sodium gradient. F-type ATPases consist of two structural domains, F(1) containing the extramembraneous catalytic core and F(0) containing the membrane proton channel, linked together by a central stalk and a peripheral stalk. During catalysis, ATP synthesis in the catalytic domain of F(1) is coupled via a rotary mechanism of the central stalk subunits to proton translocation. In terms of biological role, key component of the F(0) channel; it plays a direct role in translocation across the membrane. A homomeric c-ring of between 10-14 subunits forms the central stalk rotor element with the F(1) delta and epsilon subunits. The protein is ATP synthase subunit c of Dehalococcoides mccartyi (strain ATCC BAA-2266 / KCTC 15142 / 195) (Dehalococcoides ethenogenes (strain 195)).